We begin with the raw amino-acid sequence, 464 residues long: Serine carboxypeptidase-like 22 (464 aa).

Residues 1 to 22 form the signal peptide; sequence MARTHLLFLLFVLLSLATSSTS. N-linked (GlcNAc...) asparagine glycans are attached at residues asparagine 52, asparagine 113, and asparagine 137. 3 cysteine pairs are disulfide-bonded: cysteine 86–cysteine 346, cysteine 247–cysteine 258, and cysteine 282–cysteine 314. Serine 179 is a catalytic residue. N-linked (GlcNAc...) asparagine glycans are attached at residues asparagine 290 and asparagine 335. Active-site residues include aspartate 385 and histidine 437.

It belongs to the peptidase S10 family. Expression not detected.

It is found in the secreted. Its function is as follows. Probable carboxypeptidase. The chain is Serine carboxypeptidase-like 22 (SCPL22) from Arabidopsis thaliana (Mouse-ear cress).